The following is a 676-amino-acid chain: MYHTVPYTIESPGYLKVAGESLPRRHPRAKHGLLRYPSAGVLTVFDIVRRSAKLYPDNKAVGSRRLIKMHREFKIIQDKEKEWIYYELGPYNYLSYSQYELLAIQIGSGLRKLGLSSSNKVYLFGTTSANWISMSHGCASQGIPIVTGYDTLSATDIQHSLSQTHAEVIYLDPHLLGTASIALENSQVKTVIINTGSIFSGGYDIDQFRNEHPQFNVITYEELIQLGRHNLKEPIPVKSSDLFCIMYTSGSTGLPNGCCITHENFLAGITGLLGGIDDFVSDQERVLAYLPLAHIFEMALENLVMYIGGTLGYGNPKTLTDASLRECNGDMVEFKPTIMVGVPQIWETIRKAVLSKLNCSGFVAKTVFWTAMSFKSFAVRYSLPGKGVFDDLVFGRVRQMTGGRLRYILNGSSGIADSTKEFLSLIVAEMLTGYGLTETCANGALSSPFEQTTSAIGSTSPAIDVKLVSIPELGYFTDADAGPCQGEILVRGPAVFKGYFNNPQGTEKAFAPGGWFKTGDIGEFDDRGHLKIIDRIKSLVKMQGGEYIALEKLESIYRTSQAILQVMVHADFEYTRPIVIIMPNTKFLQDKSRELGFSDDDSTLSSERMSAYVLDDLQDIARRSGLSKIETVTGVVITDIEWTPQSGLVTPTMKLNRRFILNYFRDEVEKCMQSIG.

Position 245-256 (245-256 (IMYTSGSTGLPN)) interacts with AMP. The tract at residues 552–655 (KLESIYRTSQ…SGLVTPTMKL (104 aa)) is AMP-binding.

It belongs to the ATP-dependent AMP-binding enzyme family.

It is found in the endoplasmic reticulum. The protein operates within mycotoxin biosynthesis. Its function is as follows. Palmitoyl-CoA ligase; part of the gene cluster that mediates the biosynthesis of fumonisins B1 (FB1), B2 (FB2), B3 (FB3), and B4 (FB4), which are carcinogenic mycotoxins. Plays a role in the synthesis of ceramide and is involved in self-protection from fumonisin B1 toxicity. The biosynthesis starts with the FUM1-catalyzed carbon chain assembly from one molecule of acetyl-CoA, eight molecules of malonyl-CoA, and two molecules of methionine (in S-adenosyl form). The C18 polyketide chain is released from the enzyme by a nucleophilic attack of a carbanion, which is derived from R-carbon of alanine by decarboxylation, on the carbonyl carbon of polyketide acyl chain. This step is catalyzed by the pyridoxal 5'-phosphate-dependent aminoacyl transferase FUM8. The resultant 3-keto intermediate is then stereospecifically reduced to a 3-hydroxyl product by reductase FUM13. Subsequent oxidations at C-10 by the cytochrome P450 monooxygenase FUM2, C-14 and C-15 by FUM6, FUM12 or FUM15, tricarballylic esterification of the hydroxyl groups on C-14 and C-15 by acyltransferase FUM14, and C-5 hydroxylation by 2-keto-glutarate-dependent dioxygenase FUM3 furnish the biosynthesis of fumonisins. The tricarballylic moieties are most likely derived from the citric acid cycle, and their addition to the carbon backbone may involve FUM7, FUM10, FUM11 and FUM14. This Gibberella moniliformis (strain M3125 / FGSC 7600) (Maize ear and stalk rot fungus) protein is Palmitoyl-CoA ligase FUM16.